Reading from the N-terminus, the 232-residue chain is Lipopolysaccharide core heptose(II) kinase WaaY (232 aa).

It belongs to the protein kinase superfamily. RfaY/WaaY family.

It catalyses the reaction alpha-D-Glc-(1-&gt;3)-[L-alpha-D-Hep-(1-&gt;7)]-L-alpha-D-Hep-(1-&gt;3)-4-O-PO3(2-)-L-alpha-D-Hep-(1-&gt;5)-[alpha-Kdo-(2-&gt;4)]-alpha-Kdo-(2-&gt;6)-lipid A + ATP = alpha-D-Glc-(1-&gt;3)-[L-alpha-D-Hep-(1-&gt;7)]-4-O-PO3(2-)-L-alpha-D-Hep-(1-&gt;3)-4-O-PO3(2-)-L-alpha-D-Hep-(1-&gt;5)-[alpha-Kdo-(2-&gt;4)]-alpha-Kdo-(2-&gt;6)-lipid A + ADP + H(+). Its pathway is bacterial outer membrane biogenesis; LPS core biosynthesis. Its function is as follows. Kinase involved in the biosynthesis of the core oligosaccharide region of lipopolysaccharide (LPS). Catalyzes the phosphorylation of the second heptose unit (HepII) of the inner core. The chain is Lipopolysaccharide core heptose(II) kinase WaaY from Salmonella typhimurium (strain LT2 / SGSC1412 / ATCC 700720).